Here is a 101-residue protein sequence, read N- to C-terminus: Olivetolic acid cyclase (101 aa).

Positions 3-97 (VKHLIVLKFK…FWEKLLIFDY (95 aa)) constitute a Stress-response A/B barrel domain. Residue histidine 5 coordinates 3,5,7-trioxododecanoyl-CoA. The Mg(2+) site is built by valine 31, isoleucine 34, and methionine 37. Tyrosine 72 is a 3,5,7-trioxododecanoyl-CoA binding site. Active-site acid/base catalyst residues include tyrosine 72 and histidine 75.

In terms of assembly, homodimer. In terms of tissue distribution, expressed in glandular trichomes and at lower levels in female flowers.

It localises to the cytoplasm. The catalysed reaction is 3,5,7-trioxododecanoyl-CoA = olivetolate + CoA + H(+). It participates in secondary metabolite biosynthesis; terpenoid biosynthesis. In terms of biological role, involved in the biosynthesis of cannabinoids-related terpenophenolic natural products, which have pharmacological activity. Polyketide cyclase which functions in concert with OLS/TKS to form olivetolic acid. Has no intrinsic polyketide synthase activity and requires the presence of OLS to produce olivetolic acid. This Cannabis sativa (Hemp) protein is Olivetolic acid cyclase.